The primary structure comprises 65 residues: Small ribosomal subunit protein uS10 (65 aa).

Belongs to the universal ribosomal protein uS10 family. As to quaternary structure, part of the 30S ribosomal subunit.

In terms of biological role, involved in the binding of tRNA to the ribosomes. The protein is Small ribosomal subunit protein uS10 (rps10) of Desulfurococcus mucosus (Desulfurococcus mobilis).